The following is a 90-amino-acid chain: Small ribosomal subunit protein uS17 (90 aa).

This sequence belongs to the universal ribosomal protein uS17 family. In terms of assembly, part of the 30S ribosomal subunit.

Its function is as follows. One of the primary rRNA binding proteins, it binds specifically to the 5'-end of 16S ribosomal RNA. The protein is Small ribosomal subunit protein uS17 of Burkholderia ambifaria (strain ATCC BAA-244 / DSM 16087 / CCUG 44356 / LMG 19182 / AMMD) (Burkholderia cepacia (strain AMMD)).